The sequence spans 142 residues: UPF0275 protein PM0505 (142 aa).

Belongs to the UPF0275 family.

This is UPF0275 protein PM0505 from Pasteurella multocida (strain Pm70).